A 186-amino-acid chain; its full sequence is Elongation factor P (186 aa).

The protein belongs to the elongation factor P family.

Its subcellular location is the cytoplasm. Its pathway is protein biosynthesis; polypeptide chain elongation. Functionally, involved in peptide bond synthesis. Stimulates efficient translation and peptide-bond synthesis on native or reconstituted 70S ribosomes in vitro. Probably functions indirectly by altering the affinity of the ribosome for aminoacyl-tRNA, thus increasing their reactivity as acceptors for peptidyl transferase. The protein is Elongation factor P of Neisseria gonorrhoeae (strain NCCP11945).